The chain runs to 717 residues: ATP-dependent zinc metalloprotease FtsH (717 aa).

Topologically, residues 1-9 are cytoplasmic; the sequence is MKNASRIFK. A helical membrane pass occupies residues 10–30; the sequence is GPLIWILLCIGLIIVFLQFAG. The Extracellular segment spans residues 31–111; sequence SGNGYKDIPT…SWQGENPGQS (81 aa). The helical transmembrane segment at 112 to 132 threads the bilayer; sequence IWKALLINFLPFVIILLFFLW. Residues 133–717 lie on the Cytoplasmic side of the membrane; it reads AMNAAQGMGG…NGNPWGPPRS (585 aa). Residue 207–214 coordinates ATP; the sequence is GPPGTGKT. Residue histidine 429 coordinates Zn(2+). Glutamate 430 is a catalytic residue. Histidine 433 and aspartate 505 together coordinate Zn(2+). Residues 617-717 are disordered; that stretch reads AFTGSDKRVP…NGNPWGPPRS (101 aa). The segment covering 691-717 has biased composition (pro residues); it reads PEPPSPTHPGEGPQPPSNGNPWGPPRS.

In the central section; belongs to the AAA ATPase family. It in the C-terminal section; belongs to the peptidase M41 family. As to quaternary structure, homohexamer. Zn(2+) is required as a cofactor.

It localises to the cell membrane. Its function is as follows. Acts as a processive, ATP-dependent zinc metallopeptidase for both cytoplasmic and membrane proteins. Plays a role in the quality control of integral membrane proteins. The chain is ATP-dependent zinc metalloprotease FtsH from Cutibacterium acnes (strain SK137) (Propionibacterium acnes).